The primary structure comprises 518 residues: Zinc finger protein 449 (518 aa).

Residues 30-112 (RQRFRQFQYR…SLIEDLQREL (83 aa)) form the SCAN box domain. Positions 292 to 304 (NPTLGETPENSNL) are enriched in polar residues. The interval 292-325 (NPTLGETPENSNLEEPLNPKPHKKKSPGEKPHRC) is disordered. 7 C2H2-type zinc fingers span residues 323–345 (HRCP…QRIH), 351–373 (HKCP…QRLH), 379–401 (YECT…QRTH), 407–429 (YKCL…LKTH), 435–457 (HRCH…QRTH), 463–485 (FKCN…LRIH), and 491–513 (YKCT…QVTH).

Belongs to the krueppel C2H2-type zinc-finger protein family.

It is found in the nucleus. In terms of biological role, may be involved in transcriptional regulation. The protein is Zinc finger protein 449 (ZNF449) of Gorilla gorilla gorilla (Western lowland gorilla).